A 142-amino-acid polypeptide reads, in one-letter code: PDZ domain-containing protein 11 (142 aa).

The PDZ domain maps to 49–131; the sequence is TIVLKKPPGA…ILMKVRYFPY (83 aa).

It is found in the cytoplasm. This is PDZ domain-containing protein 11 (pdzd11) from Danio rerio (Zebrafish).